A 264-amino-acid polypeptide reads, in one-letter code: Protein-L-isoaspartate O-methyltransferase (264 aa).

The segment at 1–49 (MRKPVGSKDGSGVYSRQGLDGYTPANSNTRISTATLPRPEPLRPAASSA) is disordered. The segment covering 24–35 (PANSNTRISTAT) has biased composition (polar residues). The active site involves serine 112.

This sequence belongs to the methyltransferase superfamily. L-isoaspartyl/D-aspartyl protein methyltransferase family.

It localises to the cytoplasm. It catalyses the reaction [protein]-L-isoaspartate + S-adenosyl-L-methionine = [protein]-L-isoaspartate alpha-methyl ester + S-adenosyl-L-homocysteine. Functionally, catalyzes the methyl esterification of L-isoaspartyl residues in peptides and proteins that result from spontaneous decomposition of normal L-aspartyl and L-asparaginyl residues. It plays a role in the repair and/or degradation of damaged proteins. This chain is Protein-L-isoaspartate O-methyltransferase, found in Bordetella avium (strain 197N).